Reading from the N-terminus, the 436-residue chain is Trigger factor (436 aa).

The 86-residue stretch at 161 to 246 folds into the PPIase FKBP-type domain; sequence GDQLNIDFVG…VNSVSEAELP (86 aa).

It belongs to the FKBP-type PPIase family. Tig subfamily.

Its subcellular location is the cytoplasm. It catalyses the reaction [protein]-peptidylproline (omega=180) = [protein]-peptidylproline (omega=0). Involved in protein export. Acts as a chaperone by maintaining the newly synthesized protein in an open conformation. Functions as a peptidyl-prolyl cis-trans isomerase. The polypeptide is Trigger factor (Azotobacter vinelandii (strain DJ / ATCC BAA-1303)).